The following is a 159-amino-acid chain: UPF0756 membrane protein PTH_1668 (159 aa).

A run of 4 helical transmembrane segments spans residues I15–I37, L61–I81, P117–T137, and P138–F158.

It belongs to the UPF0756 family.

Its subcellular location is the cell membrane. The chain is UPF0756 membrane protein PTH_1668 from Pelotomaculum thermopropionicum (strain DSM 13744 / JCM 10971 / SI).